A 162-amino-acid chain; its full sequence is SsrA-binding protein (162 aa).

The protein belongs to the SmpB family.

It is found in the cytoplasm. In terms of biological role, required for rescue of stalled ribosomes mediated by trans-translation. Binds to transfer-messenger RNA (tmRNA), required for stable association of tmRNA with ribosomes. tmRNA and SmpB together mimic tRNA shape, replacing the anticodon stem-loop with SmpB. tmRNA is encoded by the ssrA gene; the 2 termini fold to resemble tRNA(Ala) and it encodes a 'tag peptide', a short internal open reading frame. During trans-translation Ala-aminoacylated tmRNA acts like a tRNA, entering the A-site of stalled ribosomes, displacing the stalled mRNA. The ribosome then switches to translate the ORF on the tmRNA; the nascent peptide is terminated with the 'tag peptide' encoded by the tmRNA and targeted for degradation. The ribosome is freed to recommence translation, which seems to be the essential function of trans-translation. The protein is SsrA-binding protein of Sorangium cellulosum (strain So ce56) (Polyangium cellulosum (strain So ce56)).